Consider the following 445-residue polypeptide: Trigger factor (445 aa).

Residues 162 to 247 (GDQVTIDAIG…IKAVHTAEPT (86 aa)) enclose the PPIase FKBP-type domain.

This sequence belongs to the FKBP-type PPIase family. Tig subfamily.

The protein localises to the cytoplasm. The enzyme catalyses [protein]-peptidylproline (omega=180) = [protein]-peptidylproline (omega=0). Functionally, involved in protein export. Acts as a chaperone by maintaining the newly synthesized protein in an open conformation. Functions as a peptidyl-prolyl cis-trans isomerase. The chain is Trigger factor from Rickettsia massiliae (strain Mtu5).